A 451-amino-acid chain; its full sequence is MFLGEDYLLTNRAAVRLFNEVKDLPIVDPHNHLDAKDIVENKPWNDIWEVEGATDHYVWELMRRCGVSEEYITGSRSNKEKWLALAKVFPRFVGNPTYEWIHLDLWRRFNIKKVISEETAEEIWEETKKKLPEMTPQKLLRDMKVEILCTTDDPVSTLEHHRKAKEAVEGVTILPTWRPDRAMNVDKEGWREYVEKMGERYGEDTSTLDGFLNALWKSHEHFKEHGCVASDHALLEPSVYYVDENRARAVHEKAFSGEKLTQDEINDYKAFMMVQFGKMNQETNWVTQLHIGALRDYRDSLFKTLGPDSGGDISTNFLRIAEGLRYFLNEFDGKLKIVLYVLDPTHLPTISTIARAFPNVYVGAPWWFNDSPFGMEMHLKYLASVDLLYNLAGMVTDSRKLLSFGSRTEMFRRVLSNVVGEMVEKGQIPIKEARELVKHVSYDGPKALFFG.

This sequence belongs to the metallo-dependent hydrolases superfamily. Uronate isomerase family. In terms of assembly, homotrimer.

The enzyme catalyses D-glucuronate = D-fructuronate. It carries out the reaction aldehydo-D-galacturonate = keto-D-tagaturonate. Its pathway is carbohydrate metabolism; pentose and glucuronate interconversion. This is Uronate isomerase from Thermotoga maritima (strain ATCC 43589 / DSM 3109 / JCM 10099 / NBRC 100826 / MSB8).